A 750-amino-acid chain; its full sequence is Glutathione biosynthesis bifunctional protein GshAB (750 aa).

Positions 1 to 333 (MIIDRLLQRS…EANRLNDLIA (333 aa)) are glutamate--cysteine ligase. Residues 32-51 (QPTQRVAQTPHPKTLGSRNY) are disordered. Positions 489-747 (KKILDEKHFP…ITPRILAKLF (259 aa)) constitute an ATP-grasp domain. 516–574 (SQIQDKPIVVKPKSTNFGLGISIFKTSANLASYEKAIDIAFTEDSAILVEEYIEGTEYR) contacts ATP. Positions 696, 717, and 719 each coordinate Mg(2+). Mn(2+) is bound by residues D696, E717, and N719.

This sequence in the N-terminal section; belongs to the glutamate--cysteine ligase type 1 family. Type 2 subfamily. Monomer. Requires Mg(2+) as cofactor. Mn(2+) serves as cofactor.

It catalyses the reaction L-cysteine + L-glutamate + ATP = gamma-L-glutamyl-L-cysteine + ADP + phosphate + H(+). It carries out the reaction gamma-L-glutamyl-L-cysteine + glycine + ATP = glutathione + ADP + phosphate + H(+). The protein operates within sulfur metabolism; glutathione biosynthesis; glutathione from L-cysteine and L-glutamate: step 1/2. It functions in the pathway sulfur metabolism; glutathione biosynthesis; glutathione from L-cysteine and L-glutamate: step 2/2. Functionally, synthesizes glutathione from L-glutamate and L-cysteine via gamma-L-glutamyl-L-cysteine. The polypeptide is Glutathione biosynthesis bifunctional protein GshAB (Streptococcus agalactiae serotype III (strain NEM316)).